A 707-amino-acid polypeptide reads, in one-letter code: Polyribonucleotide nucleotidyltransferase (707 aa).

Mg(2+) is bound by residues Asp487 and Asp493. Positions 554-613 (PKILTMNINPDKIRDVIGPSGKQINKIIEDTGVKIDIEQDGTIFISSTDESSNQKAKKII) constitute a KH domain. One can recognise an S1 motif domain in the interval 623–691 (GQLYLGKVKR…KQGRVNLSRK (69 aa)).

Belongs to the polyribonucleotide nucleotidyltransferase family. The cofactor is Mg(2+).

The protein localises to the cytoplasm. It carries out the reaction RNA(n+1) + phosphate = RNA(n) + a ribonucleoside 5'-diphosphate. In terms of biological role, involved in mRNA degradation. Catalyzes the phosphorolysis of single-stranded polyribonucleotides processively in the 3'- to 5'-direction. The protein is Polyribonucleotide nucleotidyltransferase of Bacillus velezensis (strain DSM 23117 / BGSC 10A6 / LMG 26770 / FZB42) (Bacillus amyloliquefaciens subsp. plantarum).